Consider the following 217-residue polypeptide: Probable GTP-binding protein EngB (217 aa).

An EngB-type G domain is found at 24 to 207 (SQPEICFAGR…HELIESWLIP (184 aa)). GTP is bound by residues 32–39 (GRSNAGKS), 59–63 (GRTQH), 81–84 (DLPG), 148–151 (TKCD), and 185–188 (LFSA). Mg(2+)-binding residues include S39 and T61.

Belongs to the TRAFAC class TrmE-Era-EngA-EngB-Septin-like GTPase superfamily. EngB GTPase family. Mg(2+) serves as cofactor.

Functionally, necessary for normal cell division and for the maintenance of normal septation. This chain is Probable GTP-binding protein EngB, found in Paraburkholderia phytofirmans (strain DSM 17436 / LMG 22146 / PsJN) (Burkholderia phytofirmans).